Here is a 334-residue protein sequence, read N- to C-terminus: Catabolite repressor/activator (334 aa).

Residues 1–58 (MKLDEIARLAGVSRTTASYVINGKAKQYRVSDKTVEKVMAVVREHNYHPNAVAAGLRA) enclose the HTH lacI-type domain. The segment at residues 3 to 22 (LDEIARLAGVSRTTASYVIN) is a DNA-binding region (H-T-H motif).

In terms of assembly, homotetramer.

Global transcriptional regulator, which plays an important role in the regulation of carbon metabolism. The chain is Catabolite repressor/activator (cra) from Salmonella typhimurium (strain LT2 / SGSC1412 / ATCC 700720).